A 146-amino-acid polypeptide reads, in one-letter code: D-aminoacyl-tRNA deacylase (146 aa).

Residues 137-138 (GP) carry the Gly-cisPro motif, important for rejection of L-amino acids motif.

It belongs to the DTD family. Homodimer.

It is found in the cytoplasm. It catalyses the reaction glycyl-tRNA(Ala) + H2O = tRNA(Ala) + glycine + H(+). The enzyme catalyses a D-aminoacyl-tRNA + H2O = a tRNA + a D-alpha-amino acid + H(+). Functionally, an aminoacyl-tRNA editing enzyme that deacylates mischarged D-aminoacyl-tRNAs. Also deacylates mischarged glycyl-tRNA(Ala), protecting cells against glycine mischarging by AlaRS. Acts via tRNA-based rather than protein-based catalysis; rejects L-amino acids rather than detecting D-amino acids in the active site. By recycling D-aminoacyl-tRNA to D-amino acids and free tRNA molecules, this enzyme counteracts the toxicity associated with the formation of D-aminoacyl-tRNA entities in vivo and helps enforce protein L-homochirality. This chain is D-aminoacyl-tRNA deacylase, found in Thermodesulfovibrio yellowstonii (strain ATCC 51303 / DSM 11347 / YP87).